The sequence spans 176 residues: Protein MAL2 (176 aa).

Residues 1–34 (MSAGGASVPPPPNPAVSFPVPRVTLPAGPDILRT) are Cytoplasmic-facing. Residues 31–175 (ILRTYSGAFV…SLGLALRRWR (145 aa)) enclose the MARVEL domain. Residues 35-55 (YSGAFVCLEILFGGLVWILVA) traverse the membrane as a helical segment. Residues 56–66 (SSNVPLPLLQG) lie on the Lumenal side of the membrane. The helical transmembrane segment at 67-87 (WVMFVSVTAFFFSLLFLGLFL) threads the bilayer. Topologically, residues 88-102 (SGMVTQIDANWNFLD) are cytoplasmic. Residues 103–123 (FAYHFTVFVFYFGAFLLEAAA) form a helical membrane-spanning segment. Topologically, residues 124–149 (TSLHDLHYNITMTGQPLLNDNQYNIN) are lumenal. N-linked (GlcNAc...) asparagine glycosylation occurs at N132. A helical transmembrane segment spans residues 150–170 (VAASIFAFMTTACYGCSLGLA). The Cytoplasmic segment spans residues 171–176 (LRRWRP).

It belongs to the MAL family. In terms of assembly, interacts with TPD52L2.

The protein localises to the cell membrane. The protein resides in the apical cell membrane. Functionally, member of the machinery of polarized transport. Required for the indirect transcytotic route at the step of the egress of the transcytosing cargo from perinuclear endosomes in order for it to travel to the apical surface via a raft-dependent pathway. The chain is Protein MAL2 (MAL2) from Pongo abelii (Sumatran orangutan).